Reading from the N-terminus, the 877-residue chain is Alanine--tRNA ligase (877 aa).

Positions 567, 571, 669, and 673 each coordinate Zn(2+).

Belongs to the class-II aminoacyl-tRNA synthetase family. Requires Zn(2+) as cofactor.

The protein localises to the cytoplasm. The catalysed reaction is tRNA(Ala) + L-alanine + ATP = L-alanyl-tRNA(Ala) + AMP + diphosphate. Its function is as follows. Catalyzes the attachment of alanine to tRNA(Ala) in a two-step reaction: alanine is first activated by ATP to form Ala-AMP and then transferred to the acceptor end of tRNA(Ala). Also edits incorrectly charged Ser-tRNA(Ala) and Gly-tRNA(Ala) via its editing domain. The sequence is that of Alanine--tRNA ligase from Rickettsia typhi (strain ATCC VR-144 / Wilmington).